The following is a 170-amino-acid chain: Lipoprotein signal peptidase (170 aa).

The next 3 helical transmembrane spans lie at 9 to 29, 72 to 92, and 94 to 114; these read FNIFVFIISLIFFDQLSKYLV, IFFLAMPIFILIFVFYLSLKE, and NCIARISLLLIFSGGVGNVID. Active-site residues include D124 and D146. The helical transmembrane segment at 143–163 threads the bilayer; the sequence is NFADSYVVIGMILFLVYDFFI.

Belongs to the peptidase A8 family.

The protein resides in the cell inner membrane. The enzyme catalyses Release of signal peptides from bacterial membrane prolipoproteins. Hydrolyzes -Xaa-Yaa-Zaa-|-(S,diacylglyceryl)Cys-, in which Xaa is hydrophobic (preferably Leu), and Yaa (Ala or Ser) and Zaa (Gly or Ala) have small, neutral side chains.. It participates in protein modification; lipoprotein biosynthesis (signal peptide cleavage). This protein specifically catalyzes the removal of signal peptides from prolipoproteins. The polypeptide is Lipoprotein signal peptidase (Borreliella burgdorferi (strain ATCC 35210 / DSM 4680 / CIP 102532 / B31) (Borrelia burgdorferi)).